The primary structure comprises 832 residues: Mechanosensitive cation channel TMEM63B (832 aa).

The Extracellular portion of the chain corresponds to 1 to 40 (MLPFLLATLGTAALNSSNPKDYCYSARIRSTVLQGLPFGG). A helical transmembrane segment spans residues 41–65 (VPTVLALDFMCFLALLFLFSILRKV). A lipid anchor (S-palmitoyl cysteine) is attached at Cys51. The Cytoplasmic portion of the chain corresponds to 66-145 (AWDYGRLALV…KDDEIRDKCG (80 aa)). Positions 86-88 (RER) match the Mediates endoplasmic reticulum retention motif. 4 positions are modified to phosphoserine: Ser111, Ser113, Ser114, and Ser115. Cys126 carries the S-palmitoyl cysteine lipid modification. Residues 146 to 178 (GDAVHYLSFQRHIIGLLVVVGVLSVGIVLPVNF) form a helical membrane-spanning segment. Residues 179-202 (SGDLLENNAYSFGRTTIANLKSGN) are Extracellular-facing. Residues 203–227 (NLLWLHTSFAFLYLLLTVYSMRRHT) form a helical membrane-spanning segment. The Cytoplasmic segment spans residues 228-427 (SKMRYKEDDL…IYWEHLSIRG (200 aa)). The intracellular linker IL2; confers mechanosensitivity stretch occupies residues 231–426 (RYKEDDLVKR…NIYWEHLSIR (196 aa)). Residues Cys382 and Cys398 are each lipidated (S-palmitoyl cysteine). Residues 428–457 (FIWWLRCLVINVVLFILLFFLTTPAIIITT) form a helical membrane-spanning segment. The Extracellular segment spans residues 458 to 472 (MDKFNVTKPVEYLNN). N-linked (GlcNAc...) asparagine glycosylation is present at Asn462. Residues 473–502 (PIITQFFPTLLLWCFSALLPTIVYYSAFFE) form a helical membrane-spanning segment. Over 503–506 (AHWT) the chain is Cytoplasmic. A helical transmembrane segment spans residues 507-543 (RSGENRTTMHKCYTFLIFMVLLLPSLGLSSLDLFFRW). Residues 544 to 566 (LFDKKFLAEAAIRFECVFLPDNG) are Extracellular-facing. The helical transmembrane segment at 567–599 (AFFVNYVIASAFIGNAMDLLRIPGLLMYMIRLC) threads the bilayer. The interval 567-599 (AFFVNYVIASAFIGNAMDLLRIPGLLMYMIRLC) is gating helix. Residues 600 to 619 (LARSAAERRNVKRHQAYEFQ) are Cytoplasmic-facing. A helical membrane pass occupies residues 620–638 (FGAAYAWMMCVFTVVMTYS). Residues 639-641 (ITC) are Extracellular-facing. Residues 642–666 (PIIVPFGLMYMLLKHLVDRYNLYYA) traverse the membrane as a helical segment. Residues 667-673 (YLPAKLD) lie on the Cytoplasmic side of the membrane. Residues 674–702 (KKIHSGAVNQVVAAPILCLFWLLFFSTMR) traverse the membrane as a helical segment. Topologically, residues 703–707 (TGFLA) are extracellular. Residues 708–728 (PTSMFTFVVLVITIVICLCHV) form a helical membrane-spanning segment. S-palmitoyl cysteine attachment occurs at residues Cys726 and Cys729. The Cytoplasmic segment spans residues 729-832 (CFGHFKYLSA…DSLIENEIHQ (104 aa)). 2 disordered regions span residues 748–767 (TDAVSSRSNGRPPTAGAVPK) and 776–818 (LQDS…DTDF). The segment covering 749–758 (DAVSSRSNGR) has biased composition (polar residues). Over residues 789-801 (PGSSGDEPPSSSS) the composition is skewed to low complexity.

It belongs to the CSC1 (TC 1.A.17) family. As to quaternary structure, monomer. Interacts with SLC19A2; interaction is required for the phospholipid scramblase activity. Palmitoylation is required for localization to the plasma membrane and stability. Expressed in cochlear hair cells (at protein level). Highly expressed in the subfornical organ of the brain. Expressed in small intestine. As to expression, brain-specific.

It is found in the cell membrane. The protein localises to the endoplasmic reticulum membrane. Its subcellular location is the lysosome membrane. The protein resides in the early endosome membrane. The enzyme catalyses Ca(2+)(in) = Ca(2+)(out). It catalyses the reaction Mg(2+)(in) = Mg(2+)(out). The catalysed reaction is K(+)(in) = K(+)(out). It carries out the reaction Na(+)(in) = Na(+)(out). The enzyme catalyses Cs(+)(in) = Cs(+)(out). It catalyses the reaction a 1,2-diacyl-sn-glycero-3-phosphocholine(in) = a 1,2-diacyl-sn-glycero-3-phosphocholine(out). The catalysed reaction is a sphingomyelin(in) = a sphingomyelin(out). Its function is as follows. Mechanosensitive cation channel with low conductance and high activation threshold. Osmosensitive cation channel preferentially activated by hypotonic stress. Also acts as a phospholipid scramblase in response to changes in membrane structure: upon changes in membrane curvature and thickness, alters its conformation and translocates phospholipids, such as phosphatidylcholine and sphingomyelin, thereby controlling plasma membrane lipid distribution. Forms a heterodimer with SLC19A2, which mediates phospholipid scramblase activity following Ca(2+) stimulation. Expressed in excitatory neurons of the subfornical organ and functions as a thirst receptor that mediates neuronal response to hyperosmolality to drive thirst and drinking behavior. Facilitates intestinal motility by promoting proliferation of intestinal stem cells. Essential for the baby's first breath and respiration throughout life. Upon lung inflation conducts cation currents in alveolar type 1 and 2 cells triggering lamellar body exocytosis and surfactant secretion into airspace. Acts as an osmosensor in cochlear outer hair cells (OHCs) where it mediates calcium influx and regulatory volume decrease response. Required for the maintenance of OHC morphology, OHC survival and normal hearing. In terms of biological role, brain-specific osmosensitive calcium channel isoform. This Mus musculus (Mouse) protein is Mechanosensitive cation channel TMEM63B.